A 179-amino-acid polypeptide reads, in one-letter code: Small ribosomal subunit protein uS5c (179 aa).

The S5 DRBM domain maps to 26-89 (FVERLIKISR…TDGRKNLIDV (64 aa)).

The protein belongs to the universal ribosomal protein uS5 family. As to quaternary structure, part of the 30S ribosomal subunit. Contacts protein S4.

It is found in the plastid. Its subcellular location is the chloroplast. Functionally, with S4 and S12 plays an important role in translational accuracy. The protein is Small ribosomal subunit protein uS5c (rps5) of Thalassiosira pseudonana (Marine diatom).